The chain runs to 78 residues: Small ribosomal subunit protein uS15c (78 aa).

Belongs to the universal ribosomal protein uS15 family. In terms of assembly, part of the 30S ribosomal subunit.

Its subcellular location is the plastid. The protein resides in the chloroplast. This is Small ribosomal subunit protein uS15c (rps15-A) from Saccharum officinarum (Sugarcane).